Reading from the N-terminus, the 194-residue chain is Histone H1.0 (194 aa).

M1 carries the N-acetylmethionine modification. Residues 1 to 11 (MTENSTSAPAA) are compositionally biased toward low complexity. The segment at 1-29 (MTENSTSAPAAKPKRAKASKKSTDHPKYS) is disordered. T2 carries the post-translational modification N-acetylthreonine; in Histone H1.0, N-terminally processed. The H15 domain occupies 24 to 97 (DHPKYSDMVV…GASGSFRLAK (74 aa)). R42 bears the Citrulline mark. A disordered region spans residues 84–194 (TKGVGASGSF…SSAKRAGKKK (111 aa)). The residue at position 104 (S104) is an ADP-ribosylserine. Residues 105 to 194 (VAFKKTKKEI…SSAKRAGKKK (90 aa)) are compositionally biased toward basic residues.

This sequence belongs to the histone H1/H5 family. Post-translationally, ADP-ribosylated on Ser-104 in response to DNA damage.

Its subcellular location is the nucleus. The protein resides in the chromosome. Its function is as follows. Histones H1 are necessary for the condensation of nucleosome chains into higher-order structures. The histones H1.0 are found in cells that are in terminal stages of differentiation or that have low rates of cell division. This is Histone H1.0 (H1-0) from Pongo abelii (Sumatran orangutan).